We begin with the raw amino-acid sequence, 163 residues long: Neurotrophin-3 (163 aa).

Positions 1-3 (IQS) are cleaved as a signal peptide. The propeptide occupies 4–119 (TSMDQGILTE…VLNRTSRRKR (116 aa)). The N-linked (GlcNAc...) asparagine glycan is linked to asparagine 112.

This sequence belongs to the NGF-beta family.

The protein localises to the secreted. Seems to promote the survival of visceral and proprioceptive sensory neurons. In Epicrates cenchria (Rainbow boa), this protein is Neurotrophin-3 (NTF3).